The following is a 202-amino-acid chain: Succinate dehydrogenase cytochrome b558 subunit (202 aa).

5 consecutive transmembrane segments (helical) span residues 12–31, 60–79, 93–113, 135–155, and 178–196; these read LHSL…HLVV, IFII…YIAF, NWLF…VSWH, ILSS…TIFH, and ISTY…VGLK. H28, H70, H113, and H155 together coordinate heme.

Belongs to the cytochrome b558 family. As to quaternary structure, part of an enzyme complex containing three subunits: a flavoprotein, an iron-sulfur protein and cytochrome b-558.

It localises to the cell membrane. It participates in carbohydrate metabolism; tricarboxylic acid cycle. Di-heme cytochrome of the succinate dehydrogenase complex. This Bacillus subtilis (strain 168) protein is Succinate dehydrogenase cytochrome b558 subunit (sdhC).